A 176-amino-acid polypeptide reads, in one-letter code: Disulfide bond formation protein B (176 aa).

Residues 1 to 14 (MLQFLNRCSRGRGA) are Cytoplasmic-facing. A helical transmembrane segment spans residues 15 to 31 (WLLMALTAFLLELTALY). The Periplasmic portion of the chain corresponds to 32 to 49 (FQHIMLLQPCVMCIYERV). Cys41 and Cys44 are joined by a disulfide. The helical transmembrane segment at 50 to 65 (ALFGILGASLLGAIAP) threads the bilayer. Topologically, residues 66 to 71 (RSPLRY) are cytoplasmic. A helical transmembrane segment spans residues 72-89 (LAIAVWIYSAWKGVQLAW). At 90–144 (AHTMLQLNPSPFNTCDFFVNFPSWLPLDKWLPAVFAASGDCSERQWQFMSLEMPQ) the chain is on the periplasmic side. Cys104 and Cys130 are disulfide-bonded. Residues 145 to 163 (WLVGIFAAYLVIAVLVLIS) traverse the membrane as a helical segment. Over 164-176 (QFVKPKRRDLFGR) the chain is Cytoplasmic.

Belongs to the DsbB family.

It localises to the cell inner membrane. Functionally, required for disulfide bond formation in some periplasmic proteins. Acts by oxidizing the DsbA protein. The sequence is that of Disulfide bond formation protein B from Yersinia pestis bv. Antiqua (strain Nepal516).